The sequence spans 190 residues: Selenoprotein S (190 aa).

The helical transmembrane segment at 28–48 threads the bilayer; sequence SLLASYGWYILFSCVLLYIVI. Residues 78 to 90 form a VCP/p97-interacting motif (VIM) region; it reads RQEALAAARLRMQ. Positions 96-190 are disordered; it reads QVEKHKEKQR…RRGPSSGGUS (95 aa). Basic and acidic residues predominate over residues 97–118; it reads VEKHKEKQRQLEEEKRRQKIEM. A compositionally biased stretch (gly residues) spans 160–174; sequence RGGGYNPLTGEGGGT. Residue selenocysteine 189 is a non-standard amino acid, selenocysteine.

It belongs to the selenoprotein S family. In terms of assembly, interacts with DERL1 and (via VIM motif) with VCP, suggesting that it forms a membrane complex with DERL1 that serves as a receptor for VCP. Also interacts with DERL2, DERL3 and SELENOK. The SELENOK-SELENOS complex interacts with VCP. Interacts with CCDC47. Truncated SELENOS proteins produced by failed UGA/Sec decoding are ubiquitinated by the CRL2(KLHDC2) and CRL2(KLHDC3) complexes, which recognizes the glycine (Gly) at the C-terminus of truncated SELENOS proteins. Truncated SELENOS proteins produced by failed UGA/Sec decoding are also ubiquitinated by the CRL5(KLHDC1) complex.

The protein resides in the endoplasmic reticulum membrane. It localises to the cytoplasm. In terms of biological role, involved in the degradation process of misfolded endoplasmic reticulum (ER) luminal proteins. Participates in the transfer of misfolded proteins from the ER to the cytosol, where they are destroyed by the proteasome in a ubiquitin-dependent manner. Probably acts by serving as a linker between DERL1, which mediates the retrotranslocation of misfolded proteins into the cytosol, and the ATPase complex VCP, which mediates the translocation and ubiquitination. The protein is Selenoprotein S of Rattus norvegicus (Rat).